The primary structure comprises 241 residues: Large ribosomal subunit protein uL3 (241 aa).

Disordered stretches follow at residues 140 to 162 (SHRS…NKKM) and 217 to 241 (PLPG…EETA). The residue at position 151 (glutamine 151) is an N5-methylglutamine. The span at 229 to 241 (APATEAPAAEETA) shows a compositional bias: low complexity.

This sequence belongs to the universal ribosomal protein uL3 family. As to quaternary structure, part of the 50S ribosomal subunit. Forms a cluster with proteins L14 and L19. In terms of processing, methylated by PrmB.

One of the primary rRNA binding proteins, it binds directly near the 3'-end of the 23S rRNA, where it nucleates assembly of the 50S subunit. This Methylobacterium radiotolerans (strain ATCC 27329 / DSM 1819 / JCM 2831 / NBRC 15690 / NCIMB 10815 / 0-1) protein is Large ribosomal subunit protein uL3.